The sequence spans 402 residues: Propionate kinase (402 aa).

ATP-binding residues include Asn11 and Lys18. Asn11 is a Mg(2+) binding site. Arg86 lines the substrate pocket. The active-site Proton donor/acceptor is the Asp143. Residues His175, His203–Gly207, Asp278–Arg280, and Gly326–Asn330 each bind ATP.

This sequence belongs to the acetokinase family. TdcD subfamily. As to quaternary structure, homodimer. The cofactor is Mg(2+).

It catalyses the reaction propanoate + ATP = propanoyl phosphate + ADP. Its pathway is amino-acid degradation; L-threonine degradation via propanoate pathway; propanoate from L-threonine: step 4/4. Functionally, catalyzes the conversion of propionyl phosphate and ADP to propionate and ATP. The chain is Propionate kinase from Escherichia coli O6:H1 (strain CFT073 / ATCC 700928 / UPEC).